The following is a 555-amino-acid chain: MKSEDVKLGIERAPHRSLLRALGLNTESFQKPFIGIVNSFTEVVPGHIHLRQISEAVKEGINAAGGVGFEFNTIAVCDGIAMNHAGMKYSLPSREIIANTVEIMAMAHAFDGLVFIPNCDKVVPGMLMAACRLNIPSIFVSGGPMLAGRLRKNDQVSCVDLNSVFEAVGQVAKGQMTEEELLELEKVACPGCGSCAGMFTANTMNCLTEALGMALPGNGTIPAVDSRRTQLAKSAGQQIMQLIKDNICPKDIITPDAIHNAFSLDVALGGSTNSVLHVMAVAHEAGADFSLEQINRISDCTPNLCKLRPSGPYHIENLDQSGGIGSVLKELKPWLKNDARTVSGKTIGQLADAAPKADNKVIRFASNPYSPKGGLAVLFGNLAPNGSVVKRSAVAPEMMVHRGPARIFDSEELATKAIMGGKIKPGDVLVIRYEGPKGGPGMREMLTPTSLLAGMGLDKEVALITDGRFSGATRGAAMGHVSPEAAACGPIAALQDGDMINIDIHNYKLSVELSDEEIQKRLANVPVFEPKIKSGYLKFYTENVTSASTGAVFKD.

D78 serves as a coordination point for Mg(2+). C119 is a binding site for [2Fe-2S] cluster. Residues D120 and K121 each contribute to the Mg(2+) site. At K121 the chain carries N6-carboxylysine. Position 195 (C195) interacts with [2Fe-2S] cluster. Position 444 (E444) interacts with Mg(2+). S470 (proton acceptor) is an active-site residue.

It belongs to the IlvD/Edd family. In terms of assembly, homodimer. Requires [2Fe-2S] cluster as cofactor. Mg(2+) is required as a cofactor.

It catalyses the reaction (2R)-2,3-dihydroxy-3-methylbutanoate = 3-methyl-2-oxobutanoate + H2O. The catalysed reaction is (2R,3R)-2,3-dihydroxy-3-methylpentanoate = (S)-3-methyl-2-oxopentanoate + H2O. It participates in amino-acid biosynthesis; L-isoleucine biosynthesis; L-isoleucine from 2-oxobutanoate: step 3/4. The protein operates within amino-acid biosynthesis; L-valine biosynthesis; L-valine from pyruvate: step 3/4. Functions in the biosynthesis of branched-chain amino acids. Catalyzes the dehydration of (2R,3R)-2,3-dihydroxy-3-methylpentanoate (2,3-dihydroxy-3-methylvalerate) into 2-oxo-3-methylpentanoate (2-oxo-3-methylvalerate) and of (2R)-2,3-dihydroxy-3-methylbutanoate (2,3-dihydroxyisovalerate) into 2-oxo-3-methylbutanoate (2-oxoisovalerate), the penultimate precursor to L-isoleucine and L-valine, respectively. This chain is Dihydroxy-acid dehydratase, found in Dehalococcoides mccartyi (strain CBDB1).